We begin with the raw amino-acid sequence, 200 residues long: METKKTGTTTVGIKAKDGIVLAADTQASLGHMVETLNIRKIIPITDRIAITTAGSVGDVQALARMLEAEARYYQFTWGKPMSTKAMANLLSNILNGNKWFPYLVQIILGGYVEEPTLANLDPLGGLIFDDYTATGSGSPFAIAVLEDGYKKDMSIEEAKELAVRAVRTAGKRDVYTGSRKIQIVAITKEGITEEFVEFND.

A propeptide spans Met-1 to Gly-7 (removed in mature form; by autocatalysis). Thr-8 functions as the Nucleophile in the catalytic mechanism.

Belongs to the peptidase T1B family. In terms of assembly, the 20S proteasome core is composed of 14 alpha and 14 beta subunits that assemble into four stacked heptameric rings, resulting in a barrel-shaped structure. The two inner rings, each composed of seven catalytic beta subunits, are sandwiched by two outer rings, each composed of seven alpha subunits. The catalytic chamber with the active sites is on the inside of the barrel. Has a gated structure, the ends of the cylinder being occluded by the N-termini of the alpha-subunits. Is capped at one or both ends by the proteasome regulatory ATPase, PAN.

It is found in the cytoplasm. The enzyme catalyses Cleavage of peptide bonds with very broad specificity.. With respect to regulation, the formation of the proteasomal ATPase PAN-20S proteasome complex, via the docking of the C-termini of PAN into the intersubunit pockets in the alpha-rings, triggers opening of the gate for substrate entry. Interconversion between the open-gate and close-gate conformations leads to a dynamic regulation of the 20S proteasome proteolysis activity. In terms of biological role, component of the proteasome core, a large protease complex with broad specificity involved in protein degradation. The protein is Proteasome subunit beta 2 of Thermococcus onnurineus (strain NA1).